The sequence spans 453 residues: Bifunctional protein GlmU (453 aa).

The segment at 1–231 (MERTCLAVIL…EIEMTGCNNR (231 aa)) is pyrophosphorylase. UDP-N-acetyl-alpha-D-glucosamine is bound by residues 10 to 13 (LAAG), Lys24, Gln77, 82 to 83 (GT), 105 to 107 (YGD), Gly143, Glu157, Asn172, and Asn229. Asp107 contributes to the Mg(2+) binding site. Position 229 (Asn229) interacts with Mg(2+). The linker stretch occupies residues 232–252 (AELAVIERFWQERRRREMMLA). Positions 253–453 (GVTMIAPETV…AIKAAKRAKA (201 aa)) are N-acetyltransferase. Arg318 and Lys336 together coordinate UDP-N-acetyl-alpha-D-glucosamine. His348 acts as the Proton acceptor in catalysis. Positions 351 and 362 each coordinate UDP-N-acetyl-alpha-D-glucosamine. Acetyl-CoA is bound by residues Ala365, 371-372 (NY), Ser390, Ser408, and Arg425.

The protein in the N-terminal section; belongs to the N-acetylglucosamine-1-phosphate uridyltransferase family. In the C-terminal section; belongs to the transferase hexapeptide repeat family. As to quaternary structure, homotrimer. The cofactor is Mg(2+).

It localises to the cytoplasm. It carries out the reaction alpha-D-glucosamine 1-phosphate + acetyl-CoA = N-acetyl-alpha-D-glucosamine 1-phosphate + CoA + H(+). It catalyses the reaction N-acetyl-alpha-D-glucosamine 1-phosphate + UTP + H(+) = UDP-N-acetyl-alpha-D-glucosamine + diphosphate. It functions in the pathway nucleotide-sugar biosynthesis; UDP-N-acetyl-alpha-D-glucosamine biosynthesis; N-acetyl-alpha-D-glucosamine 1-phosphate from alpha-D-glucosamine 6-phosphate (route II): step 2/2. The protein operates within nucleotide-sugar biosynthesis; UDP-N-acetyl-alpha-D-glucosamine biosynthesis; UDP-N-acetyl-alpha-D-glucosamine from N-acetyl-alpha-D-glucosamine 1-phosphate: step 1/1. Its pathway is bacterial outer membrane biogenesis; LPS lipid A biosynthesis. Its function is as follows. Catalyzes the last two sequential reactions in the de novo biosynthetic pathway for UDP-N-acetylglucosamine (UDP-GlcNAc). The C-terminal domain catalyzes the transfer of acetyl group from acetyl coenzyme A to glucosamine-1-phosphate (GlcN-1-P) to produce N-acetylglucosamine-1-phosphate (GlcNAc-1-P), which is converted into UDP-GlcNAc by the transfer of uridine 5-monophosphate (from uridine 5-triphosphate), a reaction catalyzed by the N-terminal domain. The chain is Bifunctional protein GlmU from Rhizobium etli (strain CIAT 652).